The chain runs to 514 residues: Nitric oxide reductase transcription regulator NorR1 (514 aa).

Aspartate 54 carries the 4-aspartylphosphate modification. One can recognise a Sigma-54 factor interaction domain in the interval 187-416 (IIGQSQAIAG…LEHVISRAAL (230 aa)). Residues 215–222 (GETGVGKE) and 287–296 (EVGELPLSIQ) contribute to the ATP site. Residues 490–509 (WAKAARQLGMDASNLHKLAK) constitute a DNA-binding region (H-T-H motif).

Its pathway is nitrogen metabolism; nitrate reduction (denitrification) [regulation]. Functionally, required for the nitric oxide (NO) induced expression of NO reductase. Not required for expression of 2 other pathway members, nitrate reductase (nirS) and nitrous oxide reductase (nosZ). The chain is Nitric oxide reductase transcription regulator NorR1 (norR1) from Cupriavidus necator (strain ATCC 17699 / DSM 428 / KCTC 22496 / NCIMB 10442 / H16 / Stanier 337) (Ralstonia eutropha).